Here is a 421-residue protein sequence, read N- to C-terminus: Acylglycerol kinase, mitochondrial (421 aa).

K6 is modified (N6-acetyllysine). The tract at residues 15-31 (TTAGLCLLTWGGHWLYG) is hydrophobic. Residues 58–199 (AQVKKATVFL…LDVLQIKGEK (142 aa)) form the DAGKc domain. Residues 252 to 271 (ISYTGPRERPPIEPEETPPR) form a disordered region.

The protein belongs to the AGK family. In terms of assembly, component of the TIM22 complex, which core is composed of TIMM22, associated with TIMM10 (TIMM10A and/or TIMM10B), TIMM9, AGK and TIMM29. Interacts with SMIM26. The cofactor is Mg(2+). Ubiquitously expressed.

It localises to the mitochondrion inner membrane. It is found in the mitochondrion intermembrane space. It carries out the reaction a monoacylglycerol + ATP = a monoacyl-sn-glycero-3-phosphate + ADP + H(+). It catalyses the reaction a 1,2-diacyl-sn-glycerol + ATP = a 1,2-diacyl-sn-glycero-3-phosphate + ADP + H(+). The catalysed reaction is an N-acylsphing-4-enine + ATP = an N-acylsphing-4-enine 1-phosphate + ADP + H(+). The enzyme catalyses 1,2-di-(9Z-octadecenoyl)-sn-glycerol + ATP = 1,2-di-(9Z-octadecenoyl)-sn-glycero-3-phosphate + ADP + H(+). It carries out the reaction 1-(9Z-octadecenoyl)-sn-glycerol + ATP = 1-(9Z-octadecenoyl)-sn-glycero-3-phosphate + ADP + H(+). It catalyses the reaction 1-(5Z,8Z,11Z,14Z-eicosatetraenoyl)-sn-glycerol + ATP = 1-(5Z,8Z,11Z,14Z-eicosatetraenoyl)-sn-glycero-3-phosphate + ADP + H(+). The catalysed reaction is a 1-acyl-sn-glycerol + ATP = a 1-acyl-sn-glycero-3-phosphate + ADP + H(+). The enzyme catalyses 1-hexadecanoyl-sn-glycerol + ATP = 1-hexadecanoyl-sn-glycero-3-phosphate + ADP + H(+). It carries out the reaction a 2-acylglycerol + ATP = a 2-acyl-sn-glycerol 3-phosphate + ADP + H(+). It catalyses the reaction 2-(5Z,8Z,11Z,14Z-eicosatetraenoyl)-glycerol + ATP = 2-(5Z,8Z,11Z,14Z-eicosatetraenoyl)-sn-glycero-3-phosphate + ADP + H(+). The catalysed reaction is N-(hexanoyl)sphing-4-enine + ATP = N-hexanoylsphing-4-enine 1-phosphate + ADP + H(+). The protein operates within lipid metabolism; glycerolipid metabolism. With respect to regulation, both the ceramide and diacylglycerol kinase activities are inhibited by sphingosine and stimulated by cardiolipin. Both activities are stimulated by calcium when magnesium concentrations are low but inhibited by calcium when magnesium concentrations are high. In terms of biological role, lipid kinase that can phosphorylate both monoacylglycerol and diacylglycerol to form lysophosphatidic acid (LPA) and phosphatidic acid (PA), respectively. Phosphorylates ceramide but not sphingosine. Phosphorylates 1,2-dioleoylglycerol more rapidly than 2,3-dioleoylglycerol. Independently of its lipid kinase activity, acts as a component of the TIM22 complex. The TIM22 complex mediates the import and insertion of multi-pass transmembrane proteins into the mitochondrial inner membrane by forming a twin-pore translocase that uses the membrane potential as the external driving force. In the TIM22 complex, required for the import of a subset of metabolite carriers into mitochondria, such as ANT1/SLC25A4 and SLC25A24, while it is not required for the import of TIMM23. Overexpression increases the formation and secretion of LPA, resulting in transactivation of EGFR and activation of the downstream MAPK signaling pathway, leading to increased cell growth. In Mus musculus (Mouse), this protein is Acylglycerol kinase, mitochondrial.